Reading from the N-terminus, the 397-residue chain is Neuroplastin (397 aa).

The first 28 residues, 1–28 (MSGSSLPGALALSLLLVSGSLLPGPGAA), serve as a signal peptide directing secretion. Ig-like domains follow at residues 29–134 (QNAG…PSIT), 148–234 (PRIV…IEVK), and 237–327 (PDIT…ASVS). Residues 29–338 (QNAGFVKSPM…VLRVRSHLAP (310 aa)) are Extracellular-facing. Cys52 and Cys116 are oxidised to a cystine. Positions 149-161 (RIVTSEEVIIRES) are narpin; mediates binding with FGFR1 and has antidepressant-like activity. Cys169 and Cys217 are disulfide-bonded. N-linked (GlcNAc...) asparagine glycosylation is found at Asn170, Asn196, Asn228, Asn283, Asn295, and Asn316. Cys258 and Cys315 are oxidised to a cystine. Residues 339–359 (LWPFLGILAEIIILVVIIVVY) traverse the membrane as a helical segment. Residues 360–397 (EKRKRPDEVPDDDEPAGPMKTNSTNNHKDKNLRQRNTN) lie on the Cytoplasmic side of the membrane. Residues 364 to 397 (RPDEVPDDDEPAGPMKTNSTNNHKDKNLRQRNTN) are disordered.

Interacts with ATP2B1; this interaction stabilizes ATP2B1 and increases ATPase activity; this interaction controls T cell calcium homeostasis following T cell activation. Interacts with XKR8; promoting its localization at the cell membrane. N-glycosylated. As to expression, isoform 1 and isoform 2 are widely expressed with variable levels in brain. Isoform 1 is expressed in cerebellum and midbrain. Isoform 1 and isoform 2 are expressed in cerebral cortex, hippocampus and striatum. Isoform 2 is more abundant in the cerebral cortex than isoform 1.

The protein resides in the cell membrane. It is found in the postsynaptic density. Its function is as follows. Probable homophilic and heterophilic cell adhesion molecule involved in long term potentiation at hippocampal excitatory synapses through activation of p38MAPK. May also regulate neurite outgrowth by activating the FGFR1 signaling pathway. May play a role in synaptic plasticity. Also acts as a chaperone for ATP2B1; stabilizes ATP2B1 and increases its ATPase activity. Promotes localization of XKR8 at the cell membrane. The polypeptide is Neuroplastin (Nptn) (Mus musculus (Mouse)).